Here is a 175-residue protein sequence, read N- to C-terminus: Large ribosomal subunit protein uL10 (175 aa).

The protein belongs to the universal ribosomal protein uL10 family. Part of the ribosomal stalk of the 50S ribosomal subunit. The N-terminus interacts with L11 and the large rRNA to form the base of the stalk. The C-terminus forms an elongated spine to which L12 dimers bind in a sequential fashion forming a multimeric L10(L12)X complex.

Its function is as follows. Forms part of the ribosomal stalk, playing a central role in the interaction of the ribosome with GTP-bound translation factors. In Methylococcus capsulatus (strain ATCC 33009 / NCIMB 11132 / Bath), this protein is Large ribosomal subunit protein uL10.